The sequence spans 360 residues: Neutral protease 2 homolog SS1G_13741 (360 aa).

The N-linked (GlcNAc...) asparagine glycan is linked to Asn-129. Disulfide bonds link Cys-189-Cys-261 and Cys-268-Cys-286. His-311 is a binding site for Zn(2+). The active site involves Glu-312. Residues His-315 and Asp-326 each contribute to the Zn(2+) site.

Belongs to the peptidase M35 family. It depends on Zn(2+) as a cofactor.

It is found in the secreted. It catalyses the reaction Preferential cleavage of bonds with hydrophobic residues in P1'. Also 3-Asn-|-Gln-4 and 8-Gly-|-Ser-9 bonds in insulin B chain.. In terms of biological role, secreted metalloproteinase that allows assimilation of proteinaceous substrates. Shows high activities on basic nuclear substrates such as histone and protamine. The sequence is that of Neutral protease 2 homolog SS1G_13741 from Sclerotinia sclerotiorum (strain ATCC 18683 / 1980 / Ss-1) (White mold).